A 302-amino-acid polypeptide reads, in one-letter code: Aspartate carbamoyltransferase catalytic subunit (302 aa).

Residues Arg-55 and Thr-56 each contribute to the carbamoyl phosphate site. Residue Lys-83 participates in L-aspartate binding. Carbamoyl phosphate is bound by residues Arg-105, His-133, and Gln-136. L-aspartate contacts are provided by Arg-166 and Arg-222. Residues Gly-262 and Pro-263 each coordinate carbamoyl phosphate.

The protein belongs to the aspartate/ornithine carbamoyltransferase superfamily. ATCase family. As to quaternary structure, heterododecamer (2C3:3R2) of six catalytic PyrB chains organized as two trimers (C3), and six regulatory PyrI chains organized as three dimers (R2).

The catalysed reaction is carbamoyl phosphate + L-aspartate = N-carbamoyl-L-aspartate + phosphate + H(+). It participates in pyrimidine metabolism; UMP biosynthesis via de novo pathway; (S)-dihydroorotate from bicarbonate: step 2/3. Functionally, catalyzes the condensation of carbamoyl phosphate and aspartate to form carbamoyl aspartate and inorganic phosphate, the committed step in the de novo pyrimidine nucleotide biosynthesis pathway. The protein is Aspartate carbamoyltransferase catalytic subunit of Solibacter usitatus (strain Ellin6076).